The sequence spans 493 residues: NAD(P)H-quinone oxidoreductase chain 4, chloroplastic (493 aa).

A run of 14 helical transmembrane segments spans residues 4–24 (FPWL…IPLL), 34–54 (WYTL…FGYY), 87–107 (MGLI…AWPI), 111–131 (PKLF…LFTS), 134–154 (LFLF…LISL), 167–187 (FIFY…TVCF), 212–232 (ILYL…PFHT), 242–262 (HYST…YGWI), 276–296 (FAPW…SVCL), 313–333 (MGFV…GAIC), 334–354 (QMIS…TTYD), 385–405 (SLAL…LGII), 417–437 (FIIL…LSML), and 462–482 (VFII…PNIL).

This sequence belongs to the complex I subunit 4 family.

The protein localises to the plastid. It is found in the chloroplast thylakoid membrane. It carries out the reaction a plastoquinone + NADH + (n+1) H(+)(in) = a plastoquinol + NAD(+) + n H(+)(out). It catalyses the reaction a plastoquinone + NADPH + (n+1) H(+)(in) = a plastoquinol + NADP(+) + n H(+)(out). The polypeptide is NAD(P)H-quinone oxidoreductase chain 4, chloroplastic (Chara vulgaris (Common stonewort)).